A 179-amino-acid polypeptide reads, in one-letter code: Signal peptidase complex subunit 3 (179 aa).

Topologically, residues 1–12 are cytoplasmic; that stretch reads MHTVLTRGNATV. A helical; Signal-anchor for type II membrane protein transmembrane segment spans residues 13–33; the sequence is AYTLSVLACLTFSCFLSTVFL. Residues 34–179 lie on the Lumenal side of the membrane; the sequence is DYRTDANINT…FPADYATSSI (146 aa). N-linked (GlcNAc...) asparagine glycans are attached at residues asparagine 73 and asparagine 141.

Belongs to the SPCS3 family. As to quaternary structure, component of the signal peptidase complex (SPC) composed of a catalytic subunit twr/SEC11 and three accessory subunits Spase12/SPCS1, Spase25/SPCS2 and Spase22-23/SPCS3. The complex induces a local thinning of the ER membrane which is used to measure the length of the signal peptide (SP) h-region of protein substrates. This ensures the selectivity of the complex towards h-regions shorter than 18-20 amino acids.

The protein localises to the endoplasmic reticulum membrane. Its function is as follows. Essential component of the signal peptidase complex (SPC) which catalyzes the cleavage of N-terminal signal sequences from nascent proteins as they are translocated into the lumen of the endoplasmic reticulum. Essential for the SPC catalytic activity, possibly by stabilizing and positioning the active center of the complex close to the lumenal surface. In terms of biological role, (Microbial infection) Plays an important role in infection by flaviviruses such as West Nile virus and Dengue virus type 2. The polypeptide is Signal peptidase complex subunit 3 (Spase22-23) (Drosophila melanogaster (Fruit fly)).